The primary structure comprises 4043 residues: Hybrid PKS-NRPS synthetase thnA (4043 aa).

The Ketosynthase family 3 (KS3) domain maps to 6-440; the sequence is LEPIAIVGSA…GSNAHAILEE (435 aa). Catalysis depends on for beta-ketoacyl synthase activity residues C179, H319, and H360. The segment at 558–894 is malonyl-CoA:ACP transacylase (MAT) domain; it reads VFTGQGAQWA…FSDALGFVWT (337 aa). The segment at 952–1090 is N-terminal hotdog fold; the sequence is HEILGTILPE…ATVKIILGTP (139 aa). The segment at 952 to 1256 is dehydratase (DH) domain; that stretch reads HEILGTILPE…LSIKTFAPAT (305 aa). Residues 952–1258 enclose the PKS/mFAS DH domain; sequence HEILGTILPE…IKTFAPATQA (307 aa). The active-site Proton acceptor; for dehydratase activity is the H984. Positions 1105 to 1258 are C-terminal hotdog fold; it reads LFPIDADRFY…IKTFAPATQA (154 aa). D1166 functions as the Proton donor; for dehydratase activity in the catalytic mechanism. Residues 1417-1591 form a methyltransferase (MT) domain region; that stretch reads LASMMKQITH…RKAGFAGVDA (175 aa). A ketoreductase (KR) domain region spans residues 2146–2320; the sequence is TYLLVGLTGK…GSTFDIGQVA (175 aa). The Carrier 1 domain maps to 2434 to 2512; that stretch reads EQALDILKEC…ELCDRVVDKL (79 aa). At S2472 the chain carries O-(pantetheine 4'-phosphoryl)serine. The tract at residues 2521-2618 is disordered; it reads GKQGESQPPA…PPPPEPAVER (98 aa). Over residues 2527–2536 the composition is skewed to low complexity; it reads QPPASTAQPQ. Pro residues predominate over residues 2537-2547; it reads PVAPKPKPLPV. A compositionally biased stretch (polar residues) spans 2578-2605; it reads YSATEASTRSGSPSEATRLSQKVSSKLQ. Positions 2626–3067 are condensation (C) domain; the sequence is IKSVPISLGQ…IPRFSEKQLA (442 aa). An adenylation (A) domain region spans residues 3092 to 3496; sequence QVARENPDKV…GTMVFHSRMA (405 aa). The Carrier 2 domain occupies 3614–3695; it reads TELTETMIQL…EMAQKVEETI (82 aa). The residue at position 3655 (S3655) is an O-(pantetheine 4'-phosphoryl)serine. The reductase (R) domain stretch occupies residues 3736–3954; that stretch reads ITGATGFLSK…DMLPAVLTAQ (219 aa).

It in the C-terminal section; belongs to the NRP synthetase family.

The catalysed reaction is malate + 6 malonyl-CoA + acetyl-CoA + 2 AH2 + 2 S-adenosyl-L-methionine + 5 NADPH + 9 H(+) = trihazone A + 2 A + 2 S-adenosyl-L-homocysteine + 6 CO2 + 5 NADP(+) + 7 CoA + 6 H2O. Its pathway is secondary metabolite biosynthesis. Functionally, hybrid PKS-NRPS synthetase; part of the gene cluster that produces the tetronate natural products trihazones. The PKS-NRPS synthetase thnA with the help of the trans-enoyl reductase thnE are responsible for the synthesis of the carboxylmethyl containing trihazone A. The PKS portion of thnA synthesizes beta-keto-triene chain from one acetyl-CoA and 6 equivalents of malonyl-CoA, in collaboration with thnE, which selectively reduces the enoyl intermediate during the first and fourth iteration of the PKS. The NRPS domain selects and activates malate, of which the alpha-hydroxyl group attacks the completed polyketide acyl-S-ACP chain to form the ester product. Intramolecular Dieckmann cyclization catalyzed by the terminal reductase domain releases the product as trihazone A from the PKS-NPRS. The pathway begins with the formation of trihazone A by the hybrid PKS-NRPS synthetase thnA and the trans-enoyl reductase thnE. Trihazone A is further decarboxylated by the 2-oxoglutarate-dependent dioxygenase thnC to produce trihazone D. The function of the FAD-dependent monooxygenase thnD has still to be identified. The protein is Hybrid PKS-NRPS synthetase thnA of Trichoderma harzianum (Hypocrea lixii).